A 225-amino-acid chain; its full sequence is DNA repair protein RecO (225 aa).

This sequence belongs to the RecO family.

Its function is as follows. Involved in DNA repair and RecF pathway recombination. The protein is DNA repair protein RecO of Clostridium perfringens (strain ATCC 13124 / DSM 756 / JCM 1290 / NCIMB 6125 / NCTC 8237 / Type A).